The primary structure comprises 341 residues: DNA-directed RNA polymerase subunit alpha (341 aa).

Residues 1–237 are alpha N-terminal domain (alpha-NTD); it reads MLSLSKNWNA…EQLQLFISFE (237 aa). Residues 252-341 are alpha C-terminal domain (alpha-CTD); that stretch reads FSPYLLKRVD…LSKRYEDSYN (90 aa).

It belongs to the RNA polymerase alpha chain family. Homodimer. The RNAP catalytic core consists of 2 alpha, 1 beta, 1 beta' and 1 omega subunit. When a sigma factor is associated with the core the holoenzyme is formed, which can initiate transcription.

It catalyses the reaction RNA(n) + a ribonucleoside 5'-triphosphate = RNA(n+1) + diphosphate. Functionally, DNA-dependent RNA polymerase catalyzes the transcription of DNA into RNA using the four ribonucleoside triphosphates as substrates. The polypeptide is DNA-directed RNA polymerase subunit alpha (Rickettsia bellii (strain OSU 85-389)).